The chain runs to 280 residues: Transmembrane protein 45B (280 aa).

Transmembrane regions (helical) follow at residues 7-27, 49-69, 96-116, 120-140, 150-170, 184-204, and 216-236; these read HALP…KYPL, LIEG…EQFV, MYLF…PLNL, LDRL…YYHV, IHSL…IEVF, LTIL…PLGG, and VMFI…IMAI.

This sequence belongs to the TMEM45 family.

The protein resides in the membrane. The sequence is that of Transmembrane protein 45B (tmem45b) from Xenopus tropicalis (Western clawed frog).